The following is a 132-amino-acid chain: Large ribosomal subunit protein bL19 (132 aa).

Belongs to the bacterial ribosomal protein bL19 family.

Functionally, this protein is located at the 30S-50S ribosomal subunit interface and may play a role in the structure and function of the aminoacyl-tRNA binding site. This chain is Large ribosomal subunit protein bL19, found in Maricaulis maris (strain MCS10) (Caulobacter maris).